The primary structure comprises 380 residues: Succinyl-diaminopimelate desuccinylase (380 aa).

Residue His69 participates in Zn(2+) binding. The active site involves Asp71. Asp102 contributes to the Zn(2+) binding site. Residue Glu135 is the Proton acceptor of the active site. Zn(2+)-binding residues include Glu136, Glu164, and His353.

It belongs to the peptidase M20A family. DapE subfamily. As to quaternary structure, homodimer. Zn(2+) serves as cofactor. The cofactor is Co(2+).

It carries out the reaction N-succinyl-(2S,6S)-2,6-diaminopimelate + H2O = (2S,6S)-2,6-diaminopimelate + succinate. It functions in the pathway amino-acid biosynthesis; L-lysine biosynthesis via DAP pathway; LL-2,6-diaminopimelate from (S)-tetrahydrodipicolinate (succinylase route): step 3/3. In terms of biological role, catalyzes the hydrolysis of N-succinyl-L,L-diaminopimelic acid (SDAP), forming succinate and LL-2,6-diaminopimelate (DAP), an intermediate involved in the bacterial biosynthesis of lysine and meso-diaminopimelic acid, an essential component of bacterial cell walls. The chain is Succinyl-diaminopimelate desuccinylase from Cereibacter sphaeroides (strain KD131 / KCTC 12085) (Rhodobacter sphaeroides).